The sequence spans 552 residues: CTP synthase (552 aa).

Residues 1–267 (MSKFVFVTGG…AHQTLELLRM (267 aa)) form an amidoligase domain region. CTP is bound at residue serine 13. Position 13 (serine 13) interacts with UTP. ATP is bound by residues 14–19 (SIGKGI) and aspartate 71. The Mg(2+) site is built by aspartate 71 and glutamate 141. CTP is bound by residues 148–150 (DIE), 188–193 (KTKPTQ), and lysine 224. UTP is bound by residues 188–193 (KTKPTQ) and lysine 224. A Glutamine amidotransferase type-1 domain is found at 292-534 (TVALVGKYVQ…INAVLKRRNA (243 aa)). Residue glycine 354 coordinates L-glutamine. Cysteine 381 functions as the Nucleophile; for glutamine hydrolysis in the catalytic mechanism. L-glutamine is bound by residues 382-385 (LGMQ), glutamate 405, and arginine 462. Active-site residues include histidine 507 and glutamate 509.

This sequence belongs to the CTP synthase family. As to quaternary structure, homotetramer.

The catalysed reaction is UTP + L-glutamine + ATP + H2O = CTP + L-glutamate + ADP + phosphate + 2 H(+). It catalyses the reaction L-glutamine + H2O = L-glutamate + NH4(+). The enzyme catalyses UTP + NH4(+) + ATP = CTP + ADP + phosphate + 2 H(+). It functions in the pathway pyrimidine metabolism; CTP biosynthesis via de novo pathway; CTP from UDP: step 2/2. Allosterically activated by GTP, when glutamine is the substrate; GTP has no effect on the reaction when ammonia is the substrate. The allosteric effector GTP functions by stabilizing the protein conformation that binds the tetrahedral intermediate(s) formed during glutamine hydrolysis. Inhibited by the product CTP, via allosteric rather than competitive inhibition. In terms of biological role, catalyzes the ATP-dependent amination of UTP to CTP with either L-glutamine or ammonia as the source of nitrogen. Regulates intracellular CTP levels through interactions with the four ribonucleotide triphosphates. The chain is CTP synthase from Synechocystis sp. (strain ATCC 27184 / PCC 6803 / Kazusa).